We begin with the raw amino-acid sequence, 252 residues long: tRNA (guanine-N(1)-)-methyltransferase (252 aa).

Residues glycine 113 and 133–138 (LGDYVL) each bind S-adenosyl-L-methionine.

This sequence belongs to the RNA methyltransferase TrmD family. In terms of assembly, homodimer.

The protein localises to the cytoplasm. It catalyses the reaction guanosine(37) in tRNA + S-adenosyl-L-methionine = N(1)-methylguanosine(37) in tRNA + S-adenosyl-L-homocysteine + H(+). Functionally, specifically methylates guanosine-37 in various tRNAs. The chain is tRNA (guanine-N(1)-)-methyltransferase from Stenotrophomonas maltophilia (strain K279a).